The primary structure comprises 369 residues: Phosphoserine aminotransferase (369 aa).

Residue arginine 42 coordinates L-glutamate. Pyridoxal 5'-phosphate contacts are provided by tryptophan 101, threonine 152, aspartate 176, and glutamine 199. An N6-(pyridoxal phosphate)lysine modification is found at lysine 200. Position 241–242 (241–242 (NT)) interacts with pyridoxal 5'-phosphate.

Belongs to the class-V pyridoxal-phosphate-dependent aminotransferase family. SerC subfamily. In terms of assembly, homodimer. Pyridoxal 5'-phosphate is required as a cofactor.

The protein localises to the cytoplasm. The enzyme catalyses O-phospho-L-serine + 2-oxoglutarate = 3-phosphooxypyruvate + L-glutamate. It carries out the reaction 4-(phosphooxy)-L-threonine + 2-oxoglutarate = (R)-3-hydroxy-2-oxo-4-phosphooxybutanoate + L-glutamate. It functions in the pathway amino-acid biosynthesis; L-serine biosynthesis; L-serine from 3-phospho-D-glycerate: step 2/3. It participates in cofactor biosynthesis; pyridoxine 5'-phosphate biosynthesis; pyridoxine 5'-phosphate from D-erythrose 4-phosphate: step 3/5. Functionally, catalyzes the reversible conversion of 3-phosphohydroxypyruvate to phosphoserine and of 3-hydroxy-2-oxo-4-phosphonooxybutanoate to phosphohydroxythreonine. The protein is Phosphoserine aminotransferase of Delftia acidovorans (strain DSM 14801 / SPH-1).